The primary structure comprises 255 residues: MMVEMKAVNENLKEQFVKRNKLAICATLRELKKNDTSLMVHHSHGQFISKILDVVPDNNLFVFDLGGIERENNRALYAGSLSFVAEPAGAKVEFNAEIAKTVTYDGLPAFSAQIPELLYLIQRRTYFRINTPLWPPLTCRGELPDESVFLFTIKDLSLGGLSLYTDRDTTGLLTEGDIIKSVEMDLADHGFFCVDLQFVGQAMVKVVDNKGEVQLTQRLSFKFPSLNAAQERDLQQVIFELERLQNEKKKRFQEL.

The PilZ domain occupies 122 to 240 (QRRTYFRINT…ERDLQQVIFE (119 aa)).

Belongs to the YcgR family. Monomer. Interacts with the flagellar basal bodies.

It localises to the bacterial flagellum basal body. Functionally, acts as a flagellar brake, regulating swimming and swarming in a bis-(3'-5') cyclic diguanylic acid (c-di-GMP)-dependent manner. Binds 1 c-di-GMP dimer per subunit. Increasing levels of c-di-GMP lead to decreased motility. This chain is Flagellar brake protein YcgR, found in Pectobacterium carotovorum subsp. carotovorum (strain PC1).